The sequence spans 106 residues: Large ribosomal subunit protein eL42 (106 aa).

It belongs to the eukaryotic ribosomal protein eL42 family.

In Schwanniomyces occidentalis (Yeast), this protein is Large ribosomal subunit protein eL42 (RPL44).